The primary structure comprises 757 residues: UDP-N-acetylmuramoyl-L-alanyl-D-glutamate--2,6-diaminopimelate ligase MurE homolog, chloroplastic (757 aa).

Residues 1–11 (MATAPLAFHLP) show a composition bias toward low complexity. The N-terminal 53 residues, 1–53 (MATAPLAFHLPFPFPSASRPPPRLLPPSRRPPAARLAATRRFRPPTADDEPPE), are a transit peptide targeting the chloroplast. Disordered regions lie at residues 1–112 (MATA…DEFF), 126–152 (FTRRGLIKPSAPAPSQPEEEDGLADEL), and 172–195 (VSLADEEDEEANGGGGGVDYGDDG). A compositionally biased stretch (pro residues) spans 12–30 (FPFPSASRPPPRLLPPSRR). Composition is skewed to acidic residues over residues 47-56 (ADDEPPEAAE) and 142-152 (PEEEDGLADEL).

This sequence belongs to the MurCDEF family. MurE subfamily. As to quaternary structure, component of the plastid-encoded plastid RNA polymerase (PEP) complex.

The protein localises to the plastid. It localises to the chloroplast. Functionally, required for the activity of the plastid-encoded RNA polymerase (PEP) and full expression of genes transcribed by PEP. In Oryza sativa subsp. japonica (Rice), this protein is UDP-N-acetylmuramoyl-L-alanyl-D-glutamate--2,6-diaminopimelate ligase MurE homolog, chloroplastic.